A 563-amino-acid chain; its full sequence is Ribulokinase (563 aa).

The protein belongs to the ribulokinase family.

The catalysed reaction is D-ribulose + ATP = D-ribulose 5-phosphate + ADP + H(+). It catalyses the reaction L-ribulose + ATP = L-ribulose 5-phosphate + ADP + H(+). Its pathway is carbohydrate degradation; L-arabinose degradation via L-ribulose; D-xylulose 5-phosphate from L-arabinose (bacterial route): step 2/3. This chain is Ribulokinase, found in Mycolicibacterium smegmatis (Mycobacterium smegmatis).